An 844-amino-acid chain; its full sequence is Saxiphilin (844 aa).

The N-terminal stretch at 1-19 (MAPTFQTALFFTIISLSFA) is a signal peptide. One can recognise a Transferrin-like 1; first part domain in the interval 26-106 (VRWCAISDLE…IAEPYSSNRD (81 aa)). 19 cysteine pairs are disulfide-bonded: cysteine 29–cysteine 64, cysteine 39–cysteine 55, cysteine 110–cysteine 130, cysteine 141–cysteine 148, cysteine 150–cysteine 172, cysteine 180–cysteine 202, cysteine 222–cysteine 244, cysteine 277–cysteine 360, cysteine 322–cysteine 335, cysteine 332–cysteine 343, cysteine 388–cysteine 402, cysteine 495–cysteine 527, cysteine 505–cysteine 518, cysteine 552–cysteine 839, cysteine 570–cysteine 799, cysteine 607–cysteine 685, cysteine 641–cysteine 655, cysteine 652–cysteine 668, and cysteine 725–cysteine 739. 2 Thyroglobulin type-1 domains span residues 107 to 172 (LQKC…RATC) and 177 to 244 (LPKC…PATC). An absent in transferrins region spans residues 109–249 (KCLKERQQAL…IPATCQKHDL (141 aa)). The Transferrin-like 1; second part domain maps to 245–482 (QKHDLVTTCH…LFHAMKALTG (238 aa)). One can recognise a Transferrin-like 2 domain in the interval 492–828 (VRWCTINKLE…YYTTVYGASR (337 aa)).

It belongs to the transferrin family. In terms of assembly, monomer. Plasma. Highest levels of transcripts found in the liver, the lung, the pancreas and the brain.

It localises to the secreted. In terms of biological role, binds specifically to the neurotoxin saxitoxin. Its physiological role may be to transport or sequester an endogenous organic molecule other than Fe(3+). It may participate in a detoxification mechanism for neutralizing a microbial toxin. The chain is Saxiphilin from Aquarana catesbeiana (American bullfrog).